A 296-amino-acid chain; its full sequence is Putative gluconeogenesis factor (296 aa).

The protein belongs to the gluconeogenesis factor family.

The protein localises to the cytoplasm. In terms of biological role, required for morphogenesis under gluconeogenic growth conditions. The protein is Putative gluconeogenesis factor of Vibrio cholerae serotype O1 (strain ATCC 39315 / El Tor Inaba N16961).